Consider the following 812-residue polypeptide: Outer membrane usher protein FaeD (812 aa).

The first 35 residues, 1–35 (MKKYVTTKSVQPVAFRLTTLSLVMSAVLGSASVIA), serve as a signal peptide directing secretion. An intrachain disulfide couples Cys-793 to Cys-811.

This sequence belongs to the fimbrial export usher family.

The protein localises to the cell outer membrane. Involved in the export and assembly of K88ab fimbrial subunits across the outer membrane. The chain is Outer membrane usher protein FaeD (faeD) from Escherichia coli.